The sequence spans 66 residues: Large ribosomal subunit protein bL35 (66 aa).

Composition is skewed to basic residues over residues M1–R16 and T38–L49. The interval M1–L49 is disordered.

The protein belongs to the bacterial ribosomal protein bL35 family.

The sequence is that of Large ribosomal subunit protein bL35 from Staphylococcus aureus (strain MSSA476).